The primary structure comprises 203 residues: MKVLIAYYSMYGHIHRMAEAVAEGAREVAGAEVLIRRVPETLPADVLEKMGAVETQKKMAQIPVCTIGELADADAIIFGTPTRFGNMCGQMRQFLDATGGLWMKGSLVGKLGSVFTSSATQHGGQESTILSFHITLLHQGMVVVGLPYAFQGQMRNDEIIGGSPYGASTIAGTQGERSPSENDLAAARYQGKHVASIAARLAR.

Residues 3 to 194 (VLIAYYSMYG…AAARYQGKHV (192 aa)) enclose the Flavodoxin-like domain. FMN-binding positions include 9-14 (SMYGHI) and 82-84 (TRF). Tyrosine 11 contributes to the NAD(+) binding site. Tryptophan 102 is a binding site for substrate. FMN-binding positions include 117–123 (SSATQHG) and histidine 138.

The protein belongs to the WrbA family. It depends on FMN as a cofactor.

The catalysed reaction is a quinone + NADH + H(+) = a quinol + NAD(+). It carries out the reaction a quinone + NADPH + H(+) = a quinol + NADP(+). The chain is NAD(P)H dehydrogenase (quinone) from Geotalea uraniireducens (strain Rf4) (Geobacter uraniireducens).